Here is a 736-residue protein sequence, read N- to C-terminus: DNA topoisomerase 4 subunit A (736 aa).

The 465-residue stretch at 32-496 (LPDVRDGLKP…SFEQVTLTNQ (465 aa)) folds into the Topo IIA-type catalytic domain. Tyr-120 serves as the catalytic O-(5'-phospho-DNA)-tyrosine intermediate.

It belongs to the type II topoisomerase GyrA/ParC subunit family. ParC type 1 subfamily. As to quaternary structure, heterotetramer composed of ParC and ParE.

Its subcellular location is the cell membrane. The catalysed reaction is ATP-dependent breakage, passage and rejoining of double-stranded DNA.. Its function is as follows. Topoisomerase IV is essential for chromosome segregation. It relaxes supercoiled DNA. Performs the decatenation events required during the replication of a circular DNA molecule. The protein is DNA topoisomerase 4 subunit A of Rickettsia bellii (strain RML369-C).